The primary structure comprises 205 residues: Regulator of G-protein signaling 4 (205 aa).

Residues Cys2, Cys12, and Cys95 are each lipidated (S-palmitoyl cysteine). In terms of domain architecture, RGS spans 62 to 178 (SLENLINHEC…LKSRFYLDLT (117 aa)).

Either Cys-2 or Cys-12 or both are palmitoylated. In terms of processing, phosphorylated by cyclic GMP-dependent protein kinase.

Inhibits signal transduction by increasing the GTPase activity of G protein alpha subunits thereby driving them into their inactive GDP-bound form. Activity on G(z)-alpha is inhibited by phosphorylation of the G-protein. Activity on G(z)-alpha and G(i)-alpha-1 is inhibited by palmitoylation of the G-protein. This is Regulator of G-protein signaling 4 (Rgs4) from Rattus norvegicus (Rat).